The primary structure comprises 302 residues: Dihydroorotate dehydrogenase B (NAD(+)), catalytic subunit (302 aa).

FMN contacts are provided by residues S23 and 47 to 48 (KS). Substrate contacts are provided by residues K47, 71 to 75 (NAMGL), and N125. Position 125 (N125) interacts with FMN. C128 (nucleophile) is an active-site residue. The FMN site is built by K163 and I189. 190 to 191 (NT) lines the substrate pocket. Residues G215, 241-242 (GG), and 263-264 (GT) each bind FMN.

The protein belongs to the dihydroorotate dehydrogenase family. Type 1 subfamily. As to quaternary structure, heterotetramer of 2 PyrK and 2 PyrD type B subunits. The cofactor is FMN.

The protein resides in the cytoplasm. It carries out the reaction (S)-dihydroorotate + NAD(+) = orotate + NADH + H(+). The protein operates within pyrimidine metabolism; UMP biosynthesis via de novo pathway; orotate from (S)-dihydroorotate (NAD(+) route): step 1/1. In terms of biological role, catalyzes the conversion of dihydroorotate to orotate with NAD(+) as electron acceptor. This Thermococcus kodakarensis (strain ATCC BAA-918 / JCM 12380 / KOD1) (Pyrococcus kodakaraensis (strain KOD1)) protein is Dihydroorotate dehydrogenase B (NAD(+)), catalytic subunit (pyrD).